The sequence spans 179 residues: Large ribosomal subunit protein uL5 (179 aa).

Belongs to the universal ribosomal protein uL5 family. Part of the 50S ribosomal subunit; part of the 5S rRNA/L5/L18/L25 subcomplex. Contacts the 5S rRNA and the P site tRNA. Forms a bridge to the 30S subunit in the 70S ribosome.

In terms of biological role, this is one of the proteins that bind and probably mediate the attachment of the 5S RNA into the large ribosomal subunit, where it forms part of the central protuberance. In the 70S ribosome it contacts protein S13 of the 30S subunit (bridge B1b), connecting the 2 subunits; this bridge is implicated in subunit movement. Contacts the P site tRNA; the 5S rRNA and some of its associated proteins might help stabilize positioning of ribosome-bound tRNAs. The chain is Large ribosomal subunit protein uL5 from Parasynechococcus marenigrum (strain WH8102).